The sequence spans 93 residues: Integration host factor subunit beta (93 aa).

It belongs to the bacterial histone-like protein family. Heterodimer of an alpha and a beta chain.

This protein is one of the two subunits of integration host factor, a specific DNA-binding protein that functions in genetic recombination as well as in transcriptional and translational control. This is Integration host factor subunit beta from Haemophilus ducreyi (strain 35000HP / ATCC 700724).